Reading from the N-terminus, the 386-residue chain is Cobalt-precorrin-5B C(1)-methyltransferase (386 aa).

This sequence belongs to the CbiD family.

It carries out the reaction Co-precorrin-5B + S-adenosyl-L-methionine = Co-precorrin-6A + S-adenosyl-L-homocysteine. It functions in the pathway cofactor biosynthesis; adenosylcobalamin biosynthesis; cob(II)yrinate a,c-diamide from sirohydrochlorin (anaerobic route): step 6/10. In terms of biological role, catalyzes the methylation of C-1 in cobalt-precorrin-5B to form cobalt-precorrin-6A. The sequence is that of Cobalt-precorrin-5B C(1)-methyltransferase from Prochlorococcus marinus (strain MIT 9303).